The chain runs to 220 residues: Metalloproteinase inhibitor 2 (220 aa).

Residues 1-26 form the signal peptide; sequence MGAAARTLRLALGLLLLATLLRPADA. Residue Cys-27 coordinates Zn(2+). Involved in metalloproteinase-binding stretches follow at residues 27 to 30 and 95 to 96; these read CSCS and SA. 6 disulfides stabilise this stretch: Cys-27–Cys-98, Cys-29–Cys-127, Cys-39–Cys-152, Cys-154–Cys-201, Cys-159–Cys-164, and Cys-172–Cys-193. The 126-residue stretch at 27-152 folds into the NTR domain; it reads CSCSPVHPQQ…SLNHRYQMGC (126 aa).

Belongs to the protease inhibitor I35 (TIMP) family. In terms of assembly, interacts (via the C-terminal) with MMP2 (via the C-terminal PEX domain); the interaction inhibits the MMP2 activity. In terms of processing, the activity of TIMP2 is dependent on the presence of disulfide bonds.

It localises to the secreted. Its function is as follows. Complexes with metalloproteinases (such as collagenases) and irreversibly inactivates them by binding to their catalytic zinc cofactor. Known to act on MMP-1, MMP-2, MMP-3, MMP-7, MMP-8, MMP-9, MMP-10, MMP-13, MMP-14, MMP-15, MMP-16 and MMP-19. The polypeptide is Metalloproteinase inhibitor 2 (TIMP2) (Homo sapiens (Human)).